The primary structure comprises 104 residues: N(4)-acetylcytidine amidohydrolase (104 aa).

The region spanning 7–95 (MTFFERFETD…IQDIYPGISQ (89 aa)) is the ASCH domain. Lys-22 functions as the Proton acceptor in the catalytic mechanism. Thr-25 acts as the Nucleophile in catalysis. Residue Glu-75 is the Proton donor of the active site.

It belongs to the N(4)-acetylcytidine amidohydrolase family.

It carries out the reaction N(4)-acetylcytidine + H2O = cytidine + acetate + H(+). The catalysed reaction is N(4)-acetyl-2'-deoxycytidine + H2O = 2'-deoxycytidine + acetate + H(+). The enzyme catalyses N(4)-acetylcytosine + H2O = cytosine + acetate + H(+). Functionally, catalyzes the hydrolysis of N(4)-acetylcytidine (ac4C). The polypeptide is N(4)-acetylcytidine amidohydrolase (Vibrio atlanticus (strain LGP32) (Vibrio splendidus (strain Mel32))).